A 98-amino-acid polypeptide reads, in one-letter code: Integration host factor subunit alpha (98 aa).

The disordered stretch occupies residues 49-71 (FGNFDLRDKNQRPGRNPKTGEDI).

It belongs to the bacterial histone-like protein family. As to quaternary structure, heterodimer of an alpha and a beta chain.

Functionally, this protein is one of the two subunits of integration host factor, a specific DNA-binding protein that functions in genetic recombination as well as in transcriptional and translational control. The chain is Integration host factor subunit alpha from Shewanella sp. (strain MR-4).